The chain runs to 96 residues: Large ribosomal subunit protein eL43 (96 aa).

The segment at 39 to 60 (CTFCGKTATKRTCVGIWKCKKC) adopts a C4-type zinc-finger fold.

This sequence belongs to the eukaryotic ribosomal protein eL43 family. In terms of assembly, component of the large ribosomal subunit. Mature ribosomes consist of a small (40S) and a large (60S) subunit. The 40S subunit contains about 32 different proteins and 1 molecule of RNA (18S). The 60S subunit contains about 42 different proteins and 3 molecules of RNA (28S, 5.8S and 5S).

Its subcellular location is the cytoplasm. In terms of biological role, component of the ribosome, a large ribonucleoprotein complex responsible for the synthesis of proteins in the cell. The small ribosomal subunit (SSU) binds messenger RNAs (mRNAs) and translates the encoded message by selecting cognate aminoacyl-transfer RNA (tRNA) molecules. The large subunit (LSU) contains the ribosomal catalytic site termed the peptidyl transferase center (PTC), which catalyzes the formation of peptide bonds, thereby polymerizing the amino acids delivered by tRNAs into a polypeptide chain. The nascent polypeptides leave the ribosome through a tunnel in the LSU and interact with protein factors that function in enzymatic processing, targeting, and the membrane insertion of nascent chains at the exit of the ribosomal tunnel. In Plasmodium falciparum (isolate 3D7), this protein is Large ribosomal subunit protein eL43.